The sequence spans 443 residues: Chromosomal replication initiator protein DnaA (443 aa).

The tract at residues 1–67 (MDAWSRSLER…RELLAHFAGF (67 aa)) is domain I, interacts with DnaA modulators. A domain II region spans residues 67–105 (FSDVFLEIGSRPRPVEAQNAPVSTPSAHVSSEPQVPFAG). The interval 106–323 (NLDNHYTFAN…GALNTLTARA (218 aa)) is domain III, AAA+ region. G151, G153, K154, and T155 together coordinate ATP. The tract at residues 324 to 443 (NFTGRAITTE…WDKLIRKLSE (120 aa)) is domain IV, binds dsDNA.

It belongs to the DnaA family. Oligomerizes as a right-handed, spiral filament on DNA at oriC.

It is found in the cytoplasm. Functionally, plays an essential role in the initiation and regulation of chromosomal replication. ATP-DnaA binds to the origin of replication (oriC) to initiate formation of the DNA replication initiation complex once per cell cycle. Binds the DnaA box (a 9 base pair repeat at the origin) and separates the double-stranded (ds)DNA. Forms a right-handed helical filament on oriC DNA; dsDNA binds to the exterior of the filament while single-stranded (ss)DNA is stabiized in the filament's interior. The ATP-DnaA-oriC complex binds and stabilizes one strand of the AT-rich DNA unwinding element (DUE), permitting loading of DNA polymerase. After initiation quickly degrades to an ADP-DnaA complex that is not apt for DNA replication. Binds acidic phospholipids. This chain is Chromosomal replication initiator protein DnaA, found in Stenotrophomonas maltophilia (strain K279a).